Reading from the N-terminus, the 278-residue chain is MEKEVWRFIDSGNCSPAFNMALDEALLEWHSEGKIPPTIRFYGWNPPTLSIGYFQKVEKEIDMEAVKKYGLGFVRRPTGGRGVLHDQELTYSVIVSELHPAMPQTVTEAYRVISQGILEGFRFLGLDAYFAVPKTEEEKADLKNPRSAVCFDAPSWYELVVEGRKVAGSAQTRQKGVILQHGSILLHLDEDMLFSLFKYPNERVKERLRQNFKNKAVAINELTDRNITINEAKEAFFRGFEKGLNVQLERYELTDDELFYVQQLAKNKYETDEWNFKR.

The region spanning 33 to 248 is the BPL/LPL catalytic domain; it reads GKIPPTIRFY…GFEKGLNVQL (216 aa). Catalysis depends on Cys150, which acts as the Acyl-thioester intermediate.

It belongs to the octanoyltransferase LipM family. Monomer.

The enzyme catalyses octanoyl-[ACP] + L-lysyl-[protein] = N(6)-octanoyl-L-lysyl-[protein] + holo-[ACP] + H(+). Its pathway is protein modification; protein lipoylation via endogenous pathway; protein N(6)-(lipoyl)lysine from octanoyl-[acyl-carrier-protein]. Functionally, catalyzes the transfer of endogenously produced octanoic acid from octanoyl-acyl-carrier-protein onto the lipoyl domain of GcvH, an intermediate carrier during protein lipoylation. This Anoxybacillus flavithermus (strain DSM 21510 / WK1) protein is Octanoyltransferase LipM.